The chain runs to 463 residues: Glycine--tRNA ligase (463 aa).

R98 and E170 together coordinate substrate. Residues 202–204 (RNE), 212–217 (FRTREF), 287–288 (EL), and 331–334 (GIER) contribute to the ATP site. Substrate is bound at residue 217–221 (FEQFE). 327 to 331 (EPSLG) contacts substrate.

It belongs to the class-II aminoacyl-tRNA synthetase family. In terms of assembly, homodimer.

It is found in the cytoplasm. The enzyme catalyses tRNA(Gly) + glycine + ATP = glycyl-tRNA(Gly) + AMP + diphosphate. Its function is as follows. Catalyzes the attachment of glycine to tRNA(Gly). This chain is Glycine--tRNA ligase, found in Mycoplasmoides gallisepticum (strain R(low / passage 15 / clone 2)) (Mycoplasma gallisepticum).